Reading from the N-terminus, the 310-residue chain is Bifunctional phosphoglucose/phosphomannose isomerase (310 aa).

Positions 22–152 (FDGSFRTGTF…IRPKHEDIEE (131 aa)) constitute an SIS domain. Residues Gly-41, Ser-42, Ser-80, Ser-82, Thr-85, and Arg-128 each contribute to the D-fructose 6-phosphate site. Glu-202 acts as the Proton acceptor in catalysis. D-fructose 6-phosphate contacts are provided by His-218 and Lys-306. His-218 acts as the Proton donor in catalysis. The active-site Proton acceptor is Lys-306.

This sequence belongs to the PGI/PMI family. As to quaternary structure, homodimer.

The enzyme catalyses alpha-D-glucose 6-phosphate = beta-D-fructose 6-phosphate. It carries out the reaction D-mannose 6-phosphate = D-fructose 6-phosphate. With respect to regulation, inhibited by low concentrations of erythrose 4-phosphate and 6-phosphogluconate. Dual specificity isomerase that catalyzes the isomerization of both glucose-6-phosphate and mannose-6-phosphate to fructose-6-phosphate with similar catalytic efficiency. This Thermoplasma acidophilum (strain ATCC 25905 / DSM 1728 / JCM 9062 / NBRC 15155 / AMRC-C165) protein is Bifunctional phosphoglucose/phosphomannose isomerase.